The following is a 480-amino-acid chain: MNFETVIGLEVHVELNTNSKIFSPSSAHFGQEQNANTNVIDWSFPGVLPVMNKGVVDAGIKAALALNMDIHQNMHFDRKNYFYPDNPKAYQISQFDEPIGYNGWIEIELEDGTRKKIRIERAHLEEDAGKNTHGTDGYSYVDLNRQGVPLIEIVSEADMRSPEEAYAYLTALKEIIQYTGISDVKMEEGSMRVDANISLRPYGQEEFGTKAELKNLNSFNNVRKGLIHEEKRQAQVLRSGGQIQQETRRFDETTGETILMRVKEGSSDYRYFPEPDLPLFDISDEWIDQVRLELPEFPQERRAKYVSSFGLSSYDASQLTATKATSDFFEKAVAIGGDAKQVSNWLQGEVAQFLNSESKSIEEIGLTPENLVEMISLIADGTISSKIAKKVFVHLAKNGGSAEEFVKKAGLVQISDPEVLIPIIHQVFADNEAAVIDFKSGKRNADKAFTGYLMKATKGQANPQVALKLLAQELAKLKEE.

The protein belongs to the GatB/GatE family. GatB subfamily. Heterotrimer of A, B and C subunits.

The enzyme catalyses L-glutamyl-tRNA(Gln) + L-glutamine + ATP + H2O = L-glutaminyl-tRNA(Gln) + L-glutamate + ADP + phosphate + H(+). It carries out the reaction L-aspartyl-tRNA(Asn) + L-glutamine + ATP + H2O = L-asparaginyl-tRNA(Asn) + L-glutamate + ADP + phosphate + 2 H(+). In terms of biological role, allows the formation of correctly charged Asn-tRNA(Asn) or Gln-tRNA(Gln) through the transamidation of misacylated Asp-tRNA(Asn) or Glu-tRNA(Gln) in organisms which lack either or both of asparaginyl-tRNA or glutaminyl-tRNA synthetases. The reaction takes place in the presence of glutamine and ATP through an activated phospho-Asp-tRNA(Asn) or phospho-Glu-tRNA(Gln). In Streptococcus agalactiae serotype III (strain NEM316), this protein is Aspartyl/glutamyl-tRNA(Asn/Gln) amidotransferase subunit B.